The sequence spans 199 residues: Probable septum site-determining protein MinC (199 aa).

It belongs to the MinC family. As to quaternary structure, interacts with MinD and FtsZ.

In terms of biological role, cell division inhibitor that blocks the formation of polar Z ring septums. Rapidly oscillates between the poles of the cell to destabilize FtsZ filaments that have formed before they mature into polar Z rings. Prevents FtsZ polymerization. The chain is Probable septum site-determining protein MinC from Persephonella marina (strain DSM 14350 / EX-H1).